Here is a 216-residue protein sequence, read N- to C-terminus: Adenylate kinase (216 aa).

10–15 (GAGKGT) provides a ligand contact to ATP. Residues 30 to 59 (STGDIFRANIKEKTPLGIEAKRYIDNGQLV) form an NMP region. AMP is bound by residues Thr-31, Arg-36, 57 to 59 (QLV), 85 to 88 (GFPR), and Gln-92. The tract at residues 126–163 (GRRVCTSCGASYHIRFNPPKIEGKCDICDNELIQRKDD) is LID. Arg-127 lines the ATP pocket. Cys-130 and Cys-133 together coordinate Zn(2+). 136–137 (SY) contacts ATP. Zn(2+) is bound by residues Cys-150 and Cys-153. AMP is bound by residues Arg-160 and Arg-171. Glu-199 provides a ligand contact to ATP.

This sequence belongs to the adenylate kinase family. Monomer.

The protein localises to the cytoplasm. The catalysed reaction is AMP + ATP = 2 ADP. It functions in the pathway purine metabolism; AMP biosynthesis via salvage pathway; AMP from ADP: step 1/1. Its function is as follows. Catalyzes the reversible transfer of the terminal phosphate group between ATP and AMP. Plays an important role in cellular energy homeostasis and in adenine nucleotide metabolism. The polypeptide is Adenylate kinase (Clostridium botulinum (strain ATCC 19397 / Type A)).